Here is a 185-residue protein sequence, read N- to C-terminus: Ribosome-recycling factor (185 aa).

Belongs to the RRF family.

It localises to the cytoplasm. Functionally, responsible for the release of ribosomes from messenger RNA at the termination of protein biosynthesis. May increase the efficiency of translation by recycling ribosomes from one round of translation to another. The protein is Ribosome-recycling factor of Neorickettsia sennetsu (strain ATCC VR-367 / Miyayama) (Ehrlichia sennetsu).